A 340-amino-acid chain; its full sequence is tRNA N6-adenosine threonylcarbamoyltransferase (340 aa).

Fe cation is bound by residues His111 and His115. Residues 133-137 (VVSGG), Asp166, Gly179, Asp183, and Asn272 each bind substrate. Asp300 is a binding site for Fe cation.

The protein belongs to the KAE1 / TsaD family. Fe(2+) is required as a cofactor.

It is found in the cytoplasm. The catalysed reaction is L-threonylcarbamoyladenylate + adenosine(37) in tRNA = N(6)-L-threonylcarbamoyladenosine(37) in tRNA + AMP + H(+). Required for the formation of a threonylcarbamoyl group on adenosine at position 37 (t(6)A37) in tRNAs that read codons beginning with adenine. Is involved in the transfer of the threonylcarbamoyl moiety of threonylcarbamoyl-AMP (TC-AMP) to the N6 group of A37, together with TsaE and TsaB. TsaD likely plays a direct catalytic role in this reaction. The protein is tRNA N6-adenosine threonylcarbamoyltransferase of Geobacter sulfurreducens (strain ATCC 51573 / DSM 12127 / PCA).